We begin with the raw amino-acid sequence, 338 residues long: MSNEKIAILGPGSWGTALAQVLNDNGHQVCLWGDSQEQIDEINQKHTNTRYFKDIVIDEKIKATTDLKEALKDANAILFVVPTKVTRLVAKQVAETLDHKVIMMHASKGLEPGTHERLSTVISEEVPAELRSEIVVVSGPSHAEETIVRDITLITAASRDLEAAKYVQALFSNHYFRLYTNSDVIGVETAGALKNIIAVGAGALHGLGYGDNAKAAVITRGLAEITRLGVKLGADPLTYSGLSGVGDLIVTGTSVHSRNWRAGDALGRGEKLEDIERNMGMVIEGISTTKVAYEIAQELGVYMPITTAIYKSIYEGAGIKESILGMMSNEFRSENEWH.

The NADPH site is built by Ser-13, Trp-14, and Lys-108. Sn-glycerol 3-phosphate contacts are provided by Lys-108, Gly-139, and Ser-141. Ala-143 serves as a coordination point for NADPH. 5 residues coordinate sn-glycerol 3-phosphate: Lys-194, Asp-247, Ser-257, Arg-258, and Asn-259. The active-site Proton acceptor is Lys-194. Arg-258 contacts NADPH. Residues Val-282 and Glu-284 each contribute to the NADPH site.

It belongs to the NAD-dependent glycerol-3-phosphate dehydrogenase family.

It is found in the cytoplasm. It catalyses the reaction sn-glycerol 3-phosphate + NAD(+) = dihydroxyacetone phosphate + NADH + H(+). It carries out the reaction sn-glycerol 3-phosphate + NADP(+) = dihydroxyacetone phosphate + NADPH + H(+). It participates in membrane lipid metabolism; glycerophospholipid metabolism. Catalyzes the reduction of the glycolytic intermediate dihydroxyacetone phosphate (DHAP) to sn-glycerol 3-phosphate (G3P), the key precursor for phospholipid synthesis. The sequence is that of Glycerol-3-phosphate dehydrogenase [NAD(P)+] from Streptococcus uberis (strain ATCC BAA-854 / 0140J).